Here is a 197-residue protein sequence, read N- to C-terminus: Shikimate kinase (197 aa).

Gly26–Arg31 serves as a coordination point for ATP. Residue Ser30 coordinates Mg(2+). Asp48, Arg72, and Gly94 together coordinate substrate. An ATP-binding site is contributed by Arg132. A substrate-binding site is contributed by Arg150.

The protein belongs to the shikimate kinase family. In terms of assembly, monomer. Mg(2+) is required as a cofactor.

Its subcellular location is the cytoplasm. It catalyses the reaction shikimate + ATP = 3-phosphoshikimate + ADP + H(+). The protein operates within metabolic intermediate biosynthesis; chorismate biosynthesis; chorismate from D-erythrose 4-phosphate and phosphoenolpyruvate: step 5/7. Catalyzes the specific phosphorylation of the 3-hydroxyl group of shikimic acid using ATP as a cosubstrate. This is Shikimate kinase from Prochlorococcus marinus (strain MIT 9211).